A 156-amino-acid polypeptide reads, in one-letter code: SsrA-binding protein (156 aa).

The protein belongs to the SmpB family.

The protein localises to the cytoplasm. Required for rescue of stalled ribosomes mediated by trans-translation. Binds to transfer-messenger RNA (tmRNA), required for stable association of tmRNA with ribosomes. tmRNA and SmpB together mimic tRNA shape, replacing the anticodon stem-loop with SmpB. tmRNA is encoded by the ssrA gene; the 2 termini fold to resemble tRNA(Ala) and it encodes a 'tag peptide', a short internal open reading frame. During trans-translation Ala-aminoacylated tmRNA acts like a tRNA, entering the A-site of stalled ribosomes, displacing the stalled mRNA. The ribosome then switches to translate the ORF on the tmRNA; the nascent peptide is terminated with the 'tag peptide' encoded by the tmRNA and targeted for degradation. The ribosome is freed to recommence translation, which seems to be the essential function of trans-translation. This is SsrA-binding protein from Staphylococcus haemolyticus (strain JCSC1435).